The sequence spans 396 residues: Mevalonate kinase (396 aa).

Residues Lys-13, Asn-55, Ser-135, and 140 to 146 (GAGLGSS) contribute to the ATP site. Ser-146 functions as the Proton donor in the catalytic mechanism. Residues Ser-146 and Glu-193 each contribute to the Mg(2+) site. Asp-204 acts as the Proton acceptor in catalysis.

Belongs to the GHMP kinase family. Mevalonate kinase subfamily. As to quaternary structure, homodimer. Requires Mg(2+) as cofactor.

The protein localises to the cytoplasm. It is found in the peroxisome. The enzyme catalyses (R)-mevalonate + ATP = (R)-5-phosphomevalonate + ADP + H(+). It participates in isoprenoid biosynthesis; isopentenyl diphosphate biosynthesis via mevalonate pathway; isopentenyl diphosphate from (R)-mevalonate: step 1/3. With respect to regulation, farnesyl pyrophosphate and geranyl pyrophosphate inhibit mevalonate kinase activity by binding competitively at the ATP-binding sites. Catalyzes the phosphorylation of mevalonate to mevalonate 5-phosphate, a key step in isoprenoid and cholesterol biosynthesis. The chain is Mevalonate kinase from Bos taurus (Bovine).